The chain runs to 201 residues: Peptidyl-tRNA hydrolase (201 aa).

A tRNA-binding site is contributed by tyrosine 17. The Proton acceptor role is filled by histidine 22. 3 residues coordinate tRNA: tyrosine 68, asparagine 70, and asparagine 116.

It belongs to the PTH family. Monomer.

Its subcellular location is the cytoplasm. The enzyme catalyses an N-acyl-L-alpha-aminoacyl-tRNA + H2O = an N-acyl-L-amino acid + a tRNA + H(+). Hydrolyzes ribosome-free peptidyl-tRNAs (with 1 or more amino acids incorporated), which drop off the ribosome during protein synthesis, or as a result of ribosome stalling. In terms of biological role, catalyzes the release of premature peptidyl moieties from peptidyl-tRNA molecules trapped in stalled 50S ribosomal subunits, and thus maintains levels of free tRNAs and 50S ribosomes. This is Peptidyl-tRNA hydrolase from Lawsonia intracellularis (strain PHE/MN1-00).